Here is a 227-residue protein sequence, read N- to C-terminus: Large ribosomal subunit protein uL3 (227 aa).

Gln-151 is modified (N5-methylglutamine).

Belongs to the universal ribosomal protein uL3 family. In terms of assembly, part of the 50S ribosomal subunit. Forms a cluster with proteins L14 and L19. Post-translationally, methylated by PrmB.

Its function is as follows. One of the primary rRNA binding proteins, it binds directly near the 3'-end of the 23S rRNA, where it nucleates assembly of the 50S subunit. This Gluconobacter oxydans (strain 621H) (Gluconobacter suboxydans) protein is Large ribosomal subunit protein uL3.